We begin with the raw amino-acid sequence, 108 residues long: Putative lipid-binding protein AIR1B (108 aa).

An N-terminal signal peptide occupies residues 1-23 (MAPRTSLALFVSLNLLFFTCTSA). 3 disulfide bridges follow: cysteine 28-cysteine 55, cysteine 35-cysteine 54, and cysteine 71-cysteine 107.

The protein belongs to the plant LTP family. PEARLI1 subfamily.

Its subcellular location is the secreted. In Arabidopsis thaliana (Mouse-ear cress), this protein is Putative lipid-binding protein AIR1B (AIR1B).